A 99-amino-acid polypeptide reads, in one-letter code: Acylphosphatase (99 aa).

In terms of domain architecture, Acylphosphatase-like spans 5–97; that stretch reads ILQVMIRGRV…RAGEKFSVLP (93 aa). Catalysis depends on residues Arg20 and Asn38.

The protein belongs to the acylphosphatase family.

It catalyses the reaction an acyl phosphate + H2O = a carboxylate + phosphate + H(+). The chain is Acylphosphatase (acyP) from Bradyrhizobium diazoefficiens (strain JCM 10833 / BCRC 13528 / IAM 13628 / NBRC 14792 / USDA 110).